A 424-amino-acid chain; its full sequence is Hemagglutinin-esterase (424 aa).

2 consecutive signal peptides follow at residues 1–16 (MFLL…IIGS) and 1–18 (MFLL…GSLG). The interval 7 to 127 (FVLVSCIIGS…SNDIWMQNKG (121 aa)) is esterase domain 1. The Virion surface segment spans residues 17-392 (LGFDNPPTNV…PICVYDPLPL (376 aa)). Ser-40 acts as the Nucleophile in catalysis. Cys-44 and Cys-65 are disulfide-bonded. 5 N-linked (GlcNAc...) asparagine; by host glycosylation sites follow: Asn-54, Asn-89, Asn-153, Asn-236, and Asn-301. Cystine bridges form between Cys-113–Cys-162, Cys-197–Cys-276, and Cys-205–Cys-249. The segment at 128–266 (LFYTQVYKNM…GNYLAISNEL (139 aa)) is receptor binding. The interval 267–379 (LLTVPTKAIC…RCPTAADINT (113 aa)) is esterase domain 2. Cys-307 and Cys-312 form a disulfide bridge. N-linked (GlcNAc...) asparagine; by host glycosylation is present at Asn-316. Catalysis depends on charge relay system residues Asp-326 and His-329. Residues Cys-347 and Cys-371 are joined by a disulfide bond. Asn-358 carries an N-linked (GlcNAc...) asparagine; by host glycan. The helical transmembrane segment at 393-413 (ILLGILLGVAVIIIVVLLLYF) threads the bilayer. Residues 414 to 424 (MVDNGTRLHDA) lie on the Intravirion side of the membrane. N-linked (GlcNAc...) asparagine; by host glycosylation occurs at Asn-417.

It belongs to the influenza type C/coronaviruses hemagglutinin-esterase family. Homodimer; disulfide-linked. Forms a complex with the M protein in the pre-Golgi. Associates then with S-M complex to form a ternary complex S-M-HE. Post-translationally, N-glycosylated in the host RER.

It localises to the virion membrane. Its subcellular location is the host cell membrane. It carries out the reaction N-acetyl-9-O-acetylneuraminate + H2O = N-acetylneuraminate + acetate + H(+). The enzyme catalyses N-acetyl-4-O-acetylneuraminate + H2O = N-acetylneuraminate + acetate + H(+). Structural protein that makes short spikes at the surface of the virus. Contains receptor binding and receptor-destroying activities. Mediates de-O-acetylation of N-acetyl-4-O-acetylneuraminic acid, which is probably the receptor determinant recognized by the virus on the surface of erythrocytes and susceptible cells. This receptor-destroying activity is important for virus release as it probably helps preventing self-aggregation and ensures the efficient spread of the progeny virus from cell to cell. May serve as a secondary viral attachment protein for initiating infection, the spike protein being the major one. May become a target for both the humoral and the cellular branches of the immune system. The polypeptide is Hemagglutinin-esterase (Bos taurus (Bovine)).